Reading from the N-terminus, the 588-residue chain is L-fucose isomerase (588 aa).

Catalysis depends on proton acceptor residues Glu335 and Asp359. Mn(2+)-binding residues include Glu335, Asp359, and His525.

This sequence belongs to the L-fucose isomerase family. Mn(2+) is required as a cofactor.

Its subcellular location is the cytoplasm. It carries out the reaction L-fucose = L-fuculose. The protein operates within carbohydrate degradation; L-fucose degradation; L-lactaldehyde and glycerone phosphate from L-fucose: step 1/3. In terms of biological role, converts the aldose L-fucose into the corresponding ketose L-fuculose. The protein is L-fucose isomerase of Streptococcus pneumoniae (strain ATCC 700669 / Spain 23F-1).